Here is a 203-residue protein sequence, read N- to C-terminus: Large ribosomal subunit protein uL22 (203 aa).

Polar residues-rich tracts occupy residues 116 to 126 and 134 to 167; these read QNGGESQNQEY and VSKS…DSQL. Positions 116–203 are disordered; it reads QNGGESQNQE…TVLAQEKEVK (88 aa). A compositionally biased stretch (low complexity) spans 168-194; the sequence is SAKTNSTTTAKKTDLADNNTKNDATNT.

This sequence belongs to the universal ribosomal protein uL22 family. Part of the 50S ribosomal subunit.

Functionally, this protein binds specifically to 23S rRNA; its binding is stimulated by other ribosomal proteins, e.g. L4, L17, and L20. It is important during the early stages of 50S assembly. It makes multiple contacts with different domains of the 23S rRNA in the assembled 50S subunit and ribosome. Its function is as follows. The globular domain of the protein is located near the polypeptide exit tunnel on the outside of the subunit, while an extended beta-hairpin is found that lines the wall of the exit tunnel in the center of the 70S ribosome. This chain is Large ribosomal subunit protein uL22, found in Mesomycoplasma hyopneumoniae (strain 232) (Mycoplasma hyopneumoniae).